The chain runs to 354 residues: UPF0283 membrane protein CGSHiGG_02710 (354 aa).

The next 3 helical transmembrane spans lie at 57–77 (LLKFTALLFGLATVAQSVQWI), 87–107 (IYLAFALVSLIIILLGIKEII), and 211–231 (ESAVIVAISPLAVVDMFFIAW).

The protein belongs to the UPF0283 family.

The protein resides in the cell inner membrane. In Haemophilus influenzae (strain PittGG), this protein is UPF0283 membrane protein CGSHiGG_02710.